The chain runs to 256 residues: Imidazole glycerol phosphate synthase subunit HisF (256 aa).

Active-site residues include D11 and D130.

Belongs to the HisA/HisF family. Heterodimer of HisH and HisF.

The protein resides in the cytoplasm. It carries out the reaction 5-[(5-phospho-1-deoxy-D-ribulos-1-ylimino)methylamino]-1-(5-phospho-beta-D-ribosyl)imidazole-4-carboxamide + L-glutamine = D-erythro-1-(imidazol-4-yl)glycerol 3-phosphate + 5-amino-1-(5-phospho-beta-D-ribosyl)imidazole-4-carboxamide + L-glutamate + H(+). It participates in amino-acid biosynthesis; L-histidine biosynthesis; L-histidine from 5-phospho-alpha-D-ribose 1-diphosphate: step 5/9. Its function is as follows. IGPS catalyzes the conversion of PRFAR and glutamine to IGP, AICAR and glutamate. The HisF subunit catalyzes the cyclization activity that produces IGP and AICAR from PRFAR using the ammonia provided by the HisH subunit. This is Imidazole glycerol phosphate synthase subunit HisF from Synechococcus sp. (strain CC9605).